We begin with the raw amino-acid sequence, 573 residues long: Splicing factor U2af large subunit A (573 aa).

The tract at residues 1 to 175 is disordered; that stretch reads MSEFEDHEGN…KSKQRVSGFD (175 aa). Residues 22–93 show a composition bias toward basic and acidic residues; the sequence is NGGRDGEIED…ERSRDKDRDH (72 aa). The span at 94-105 shows a compositional bias: basic residues; it reads RERHHRSSRHRD. The span at 106–141 shows a compositional bias: basic and acidic residues; sequence HSRERGERRERGGRDDDDYRRSRDRDHDRRRDDRGG. The span at 159-169 shows a compositional bias: basic residues; that stretch reads TRSRSPSKSKQ. RRM domains follow at residues 239-322, 359-437, and 478-564; these read RRVY…RPSD, DRIF…RANQ, and QVVT…YPED.

This sequence belongs to the splicing factor SR family. As to quaternary structure, component of the spliceosome. Interacts with SUA. Interacts with SF1 in the nucleus.

It is found in the nucleus. Functionally, necessary for the splicing of pre-mRNA. The polypeptide is Splicing factor U2af large subunit A (Arabidopsis thaliana (Mouse-ear cress)).